The chain runs to 1153 residues: Cytosolic carboxypeptidase 1 (1153 aa).

The segment at 357–400 (NQPPGVDDVVDESDENEATEVDTENDTENEEDDTGHKTQNDDIE) is disordered. Over residues 364-389 (DVVDESDENEATEVDTENDTENEEDD) the composition is skewed to acidic residues. Residues 774 to 1063 (YPYTYSMLKM…QFCLALLRLR (290 aa)) enclose the Peptidase M14 domain. Residues H845, E848, and H942 each coordinate Zn(2+). The active-site Proton donor/acceptor is the E1027. Acidic residues predominate over residues 1108–1128 (AFLEEVDYSAESNDENDPELE). Residues 1108–1153 (AFLEEVDYSAESNDENDPELEPDLRDNHALPDPSSDSELSHQDSLT) are disordered. Residues 1141–1153 (SSDSELSHQDSLT) show a composition bias toward polar residues.

This sequence belongs to the peptidase M14 family. It depends on Zn(2+) as a cofactor.

The protein localises to the cytoplasm. The protein resides in the cytosol. It localises to the nucleus. Its subcellular location is the mitochondrion. It catalyses the reaction (L-glutamyl)(n+1)-gamma-L-glutamyl-L-glutamyl-[protein] + H2O = (L-glutamyl)(n)-gamma-L-glutamyl-L-glutamyl-[protein] + L-glutamate. The enzyme catalyses C-terminal L-alpha-aminoacyl-L-glutamyl-L-glutamyl-[tubulin] + H2O = C-terminal L-alpha-aminoacyl-L-glutamyl-[tubulin] + L-glutamate. Metallocarboxypeptidase that mediates protein deglutamylation of tubulin and non-tubulin target proteins. Catalyzes the removal of polyglutamate side chains present on the gamma-carboxyl group of glutamate residues within the C-terminal tail of alpha- and beta-tubulin. Specifically cleaves tubulin long-side-chains, while it is not able to remove the branching point glutamate. Also catalyzes the removal of polyglutamate residues from the carboxy-terminus of alpha-tubulin as well as non-tubulin proteins. This is Cytosolic carboxypeptidase 1 (agtpbp1) from Danio rerio (Zebrafish).